Here is a 289-residue protein sequence, read N- to C-terminus: ATP phosphoribosyltransferase (289 aa).

It belongs to the ATP phosphoribosyltransferase family. Long subfamily. Mg(2+) serves as cofactor.

It localises to the cytoplasm. It catalyses the reaction 1-(5-phospho-beta-D-ribosyl)-ATP + diphosphate = 5-phospho-alpha-D-ribose 1-diphosphate + ATP. Its pathway is amino-acid biosynthesis; L-histidine biosynthesis; L-histidine from 5-phospho-alpha-D-ribose 1-diphosphate: step 1/9. Its activity is regulated as follows. Feedback inhibited by histidine. Functionally, catalyzes the condensation of ATP and 5-phosphoribose 1-diphosphate to form N'-(5'-phosphoribosyl)-ATP (PR-ATP). Has a crucial role in the pathway because the rate of histidine biosynthesis seems to be controlled primarily by regulation of HisG enzymatic activity. The protein is ATP phosphoribosyltransferase of Desulforudis audaxviator (strain MP104C).